The chain runs to 397 residues: Argininosuccinate synthase (397 aa).

Residue 9–17 (AYSGGLDTS) participates in ATP binding. Y87 is a binding site for L-citrulline. An ATP-binding site is contributed by G117. L-aspartate-binding residues include T119, N123, and D124. Residue N123 participates in L-citrulline binding. L-citrulline is bound by residues R127, S175, S184, E260, and Y272.

The protein belongs to the argininosuccinate synthase family. Type 1 subfamily. Homotetramer.

Its subcellular location is the cytoplasm. The enzyme catalyses L-citrulline + L-aspartate + ATP = 2-(N(omega)-L-arginino)succinate + AMP + diphosphate + H(+). It participates in amino-acid biosynthesis; L-arginine biosynthesis; L-arginine from L-ornithine and carbamoyl phosphate: step 2/3. This is Argininosuccinate synthase from Methanococcus maripaludis (strain DSM 14266 / JCM 13030 / NBRC 101832 / S2 / LL).